Here is a 347-residue protein sequence, read N- to C-terminus: Uroporphyrinogen decarboxylase (347 aa).

Substrate contacts are provided by residues 24–28 (RQAGR), Asp74, Tyr145, Ser200, and His315.

It belongs to the uroporphyrinogen decarboxylase family. Homodimer.

The protein resides in the cytoplasm. It carries out the reaction uroporphyrinogen III + 4 H(+) = coproporphyrinogen III + 4 CO2. It participates in porphyrin-containing compound metabolism; protoporphyrin-IX biosynthesis; coproporphyrinogen-III from 5-aminolevulinate: step 4/4. In terms of biological role, catalyzes the decarboxylation of four acetate groups of uroporphyrinogen-III to yield coproporphyrinogen-III. The polypeptide is Uroporphyrinogen decarboxylase (Hydrogenobaculum sp. (strain Y04AAS1)).